The following is a 326-amino-acid chain: Mitochondrial substrate carrier family protein R (326 aa).

Solcar repeat units follow at residues T9–N95, K101–I214, and V226–Y318. The next 6 helical transmembrane spans lie at M12 to L32, L64 to I84, V104 to L124, G185 to Y205, V226 to A246, and L290 to L310.

This sequence belongs to the mitochondrial carrier (TC 2.A.29) family.

Its subcellular location is the mitochondrion inner membrane. Mitochondrial solute carriers shuttle metabolites, nucleotides, and cofactors through the mitochondrial inner membrane. May be involved in the accumulation of coenzyme A in the mitochondrial matrix. This Dictyostelium discoideum (Social amoeba) protein is Mitochondrial substrate carrier family protein R (mcfR).